The sequence spans 94 residues: Putative pterin-4-alpha-carbinolamine dehydratase (94 aa).

The protein belongs to the pterin-4-alpha-carbinolamine dehydratase family.

The enzyme catalyses (4aS,6R)-4a-hydroxy-L-erythro-5,6,7,8-tetrahydrobiopterin = (6R)-L-erythro-6,7-dihydrobiopterin + H2O. This chain is Putative pterin-4-alpha-carbinolamine dehydratase, found in Caulobacter vibrioides (strain ATCC 19089 / CIP 103742 / CB 15) (Caulobacter crescentus).